The chain runs to 497 residues: Serine/arginine-rich protein PSR (497 aa).

The signal sequence occupies residues M1–A19. At A20 to G366 the chain is on the extracellular side. N92, N193, N202, N261, and N283 each carry an N-linked (GlcNAc...) asparagine glycan. The helical transmembrane segment at L367–I387 threads the bilayer. Topologically, residues Y388–D497 are cytoplasmic. The tract at residues M424–G450 is necessary for phosphorylation by PSRPK in vitro. Residues R436–D447 are compositionally biased toward acidic residues. The segment at R436–D497 is disordered. The span at G459–S471 shows a compositional bias: basic residues. Residues G476 to D497 are compositionally biased toward basic and acidic residues.

Post-translationally, phosphorylated on serine residues in the RS domain by PSRPK.

Its subcellular location is the membrane. This chain is Serine/arginine-rich protein PSR, found in Physarum polycephalum (Slime mold).